We begin with the raw amino-acid sequence, 258 residues long: Thiazole synthase 1 (258 aa).

The active-site Schiff-base intermediate with DXP is lysine 97. 1-deoxy-D-xylulose 5-phosphate contacts are provided by residues glycine 158, 184-185 (AG), and 206-207 (NT).

It belongs to the ThiG family. Homotetramer. Forms heterodimers with either ThiH or ThiS.

It is found in the cytoplasm. The enzyme catalyses [ThiS sulfur-carrier protein]-C-terminal-Gly-aminoethanethioate + 2-iminoacetate + 1-deoxy-D-xylulose 5-phosphate = [ThiS sulfur-carrier protein]-C-terminal Gly-Gly + 2-[(2R,5Z)-2-carboxy-4-methylthiazol-5(2H)-ylidene]ethyl phosphate + 2 H2O + H(+). It functions in the pathway cofactor biosynthesis; thiamine diphosphate biosynthesis. In terms of biological role, catalyzes the rearrangement of 1-deoxy-D-xylulose 5-phosphate (DXP) to produce the thiazole phosphate moiety of thiamine. Sulfur is provided by the thiocarboxylate moiety of the carrier protein ThiS. In vitro, sulfur can be provided by H(2)S. The chain is Thiazole synthase 1 from Syntrophotalea carbinolica (strain DSM 2380 / NBRC 103641 / GraBd1) (Pelobacter carbinolicus).